A 24-amino-acid chain; its full sequence is Ascaphin-3 (24 aa).

In terms of tissue distribution, expressed by the skin glands.

Its subcellular location is the secreted. Antimicrobial peptide that shows higher potency against Gram-negative bacteria than against Gram-positive bacteria. Has a very week hemolytic activity. The chain is Ascaphin-3 from Ascaphus truei (Coastal tailed frog).